The sequence spans 201 residues: Imidazoleglycerol-phosphate dehydratase (201 aa).

This sequence belongs to the imidazoleglycerol-phosphate dehydratase family.

It is found in the cytoplasm. It catalyses the reaction D-erythro-1-(imidazol-4-yl)glycerol 3-phosphate = 3-(imidazol-4-yl)-2-oxopropyl phosphate + H2O. Its pathway is amino-acid biosynthesis; L-histidine biosynthesis; L-histidine from 5-phospho-alpha-D-ribose 1-diphosphate: step 6/9. The polypeptide is Imidazoleglycerol-phosphate dehydratase (Synechococcus sp. (strain CC9902)).